A 284-amino-acid chain; its full sequence is Cell division protein DivIB (284 aa).

Basic and acidic residues predominate over residues 1-10; that stretch reads MAWLRKKEQQ. A disordered region spans residues 1–38; it reads MAWLRKKEQQSDPLTPWQQYQARQQQTPRHDRRQKPKL. Residues 1-56 are Cytoplasmic-facing; it reads MAWLRKKEQQSDPLTPWQQYQARQQQTPRHDRRQKPKLDVNLPKIQTLRRRKLVKN. Residues 57-77 traverse the membrane as a helical segment; the sequence is LVLILLPLLLLLGVFGYFASP. Residues 78 to 284 lie on the Extracellular side of the membrane; sequence LSKVGLVSVQ…YSSSEKSSND (207 aa). One can recognise a POTRA domain in the interval 79 to 150; sequence SKVGLVSVQG…NRIIIKTSEY (72 aa).

Belongs to the FtsQ/DivIB family. DivIB subfamily.

It localises to the cell membrane. Cell division protein that may be involved in stabilizing or promoting the assembly of the division complex. The protein is Cell division protein DivIB of Lacticaseibacillus rhamnosus (strain ATCC 53103 / LMG 18243 / GG) (Lactobacillus rhamnosus).